A 402-amino-acid chain; its full sequence is Flavohemoprotein (402 aa).

Residues 1–138 enclose the Globin domain; it reads MLSPEVRALV…LADLLIGRER (138 aa). His-85 provides a ligand contact to heme b. Residues Tyr-95 and Glu-137 each act as charge relay system in the active site. The interval 149–402 is reductase; that stretch reads GGWTGWRAFK…AEVFGTGGVA (254 aa). Residues 152–261 form the FAD-binding FR-type domain; the sequence is TGWRAFKVVR…SPPQGDFTLD (110 aa). FAD-binding positions include Tyr-190 and 206 to 209; that span reads RQYS. NADP(+) is bound at residue 274 to 279; sequence GVGLTP. Position 395–398 (395–398) interacts with FAD; it reads VFGT.

Belongs to the globin family. Two-domain flavohemoproteins subfamily. This sequence in the C-terminal section; belongs to the flavoprotein pyridine nucleotide cytochrome reductase family. Heme b is required as a cofactor. It depends on FAD as a cofactor.

The catalysed reaction is 2 nitric oxide + NADPH + 2 O2 = 2 nitrate + NADP(+) + H(+). It carries out the reaction 2 nitric oxide + NADH + 2 O2 = 2 nitrate + NAD(+) + H(+). Its function is as follows. Is involved in NO detoxification in an aerobic process, termed nitric oxide dioxygenase (NOD) reaction that utilizes O(2) and NAD(P)H to convert NO to nitrate, which protects the bacterium from various noxious nitrogen compounds. Therefore, plays a central role in the inducible response to nitrosative stress. The polypeptide is Flavohemoprotein (Bordetella bronchiseptica (strain ATCC BAA-588 / NCTC 13252 / RB50) (Alcaligenes bronchisepticus)).